The chain runs to 423 residues: Histidine--tRNA ligase (423 aa).

This sequence belongs to the class-II aminoacyl-tRNA synthetase family. In terms of assembly, homodimer.

It localises to the cytoplasm. The catalysed reaction is tRNA(His) + L-histidine + ATP = L-histidyl-tRNA(His) + AMP + diphosphate + H(+). The protein is Histidine--tRNA ligase of Rhodococcus erythropolis (strain PR4 / NBRC 100887).